The chain runs to 231 residues: Trypsin (231 aa).

The propeptide at 1 to 8 (FPTDDDDK) is activation peptide. The Peptidase S1 domain occupies 9-229 (IVGGYTCAAN…YVNWIQQTIA (221 aa)). 6 disulfides stabilise this stretch: Cys15–Cys145, Cys33–Cys49, Cys117–Cys218, Cys124–Cys191, Cys156–Cys170, and Cys181–Cys205. His48 (charge relay system) is an active-site residue. 4 residues coordinate Ca(2+): Glu60, Asn62, Val65, and Glu70. Residue Asp92 is the Charge relay system of the active site. Ser185 serves as the catalytic Charge relay system.

The protein belongs to the peptidase S1 family. The cofactor is Ca(2+).

The protein localises to the secreted. It localises to the extracellular space. It carries out the reaction Preferential cleavage: Arg-|-Xaa, Lys-|-Xaa.. The polypeptide is Trypsin (Sus scrofa (Pig)).